The chain runs to 146 residues: Hemoglobin subunit beta-1 (146 aa).

The Globin domain occupies histidine 2–histidine 146. Histidine 63 and histidine 92 together coordinate heme b.

It belongs to the globin family. In terms of assembly, the major hemoglobin component (HbIII) is a tetramer of two alpha-2 chains and two beta-1 chains. Red blood cells.

Its function is as follows. Involved in oxygen transport from the lung to the various peripheral tissues. This Varanus albigularis (White-throated monitor) protein is Hemoglobin subunit beta-1 (HBB1).